Consider the following 528-residue polypeptide: Tyrosine 3-monooxygenase (528 aa).

Phosphoserine; by CaMK2 is present on Ser-19. Positions 33-65 are disordered; it reads GQGAPGPSLTGSPWPGTAAPAASYTPTPRSPRF. Residues 47–59 show a composition bias toward low complexity; sequence PGTAAPAASYTPT. Ser-62 carries the post-translational modification Phosphoserine. Residue Ser-71 is modified to Phosphoserine; by CaMK2 and PKA. The Fe cation site is built by His-361, His-366, and Glu-406. Ser-502 is subject to Phosphoserine.

Belongs to the biopterin-dependent aromatic amino acid hydroxylase family. In terms of assembly, homotetramer. Interacts (when phosphorylated at Ser-19) with YWHAG; one YWHAG dimer binds to one TH tetramer and this interaction may influence the phosphorylation and dephosphorylation of other sites. Interacts with NT5DC2; the interaction results in reduced phosphorylation and decreased catalytic activity of TH. Requires Fe(2+) as cofactor. Phosphorylated on Ser-19, Ser-62 and Ser-71 by several protein kinases with different site specificities. Phosphorylation at Ser-62 and Ser-71 leads to an increase of TH activity. Phosphorylation at Ser-71 activates the enzyme and also counteracts the feedback inhibition of TH by catecholamines. Phosphorylation of Ser-19 and Ser-62 triggers the proteasomal degradation of TH through the ubiquitin-proteasome pathway. Phosphorylation at Ser-62 facilitates transport of TH from the soma to the nerve terminals via the microtubule network. Phosphorylation at Ser-19 induces the high-affinity binding to the 14-3-3 protein YWHAG; this interaction may influence the phosphorylation and dephosphorylation of other sites. Ser-19 increases the phosphorylation at Ser-71 in a hierarchical manner, leading to increased activity. As to expression, mainly expressed in the brain and adrenal glands.

It localises to the cytoplasm. The protein localises to the perinuclear region. It is found in the nucleus. The protein resides in the cell projection. Its subcellular location is the axon. It localises to the cytoplasmic vesicle. The protein localises to the secretory vesicle. It is found in the synaptic vesicle. The catalysed reaction is (6R)-L-erythro-5,6,7,8-tetrahydrobiopterin + L-tyrosine + O2 = (4aS,6R)-4a-hydroxy-L-erythro-5,6,7,8-tetrahydrobiopterin + L-dopa. It participates in catecholamine biosynthesis; dopamine biosynthesis; dopamine from L-tyrosine: step 1/2. With respect to regulation, inhibited in feedback fashion by the catecholamine neurotransmitters, especially by dopamine in competition with tetrahydrobiopterin. Phosphorylation of several Ser/Thr residues in the N-terminus regulates the catalytic activity. Ser-62 and Ser-71 are readily phosphorylated to activate the catalytic activity. A Cysteine modification induced by N-ethylmaleimide (NEM), inhibits tyrosine 3-monooxygenase activity through the modification of the Cys-207. Catalyzes the conversion of L-tyrosine to L-dihydroxyphenylalanine (L-Dopa), the rate-limiting step in the biosynthesis of catecholamines, dopamine, noradrenaline, and adrenaline. Uses tetrahydrobiopterin and molecular oxygen to convert tyrosine to L-Dopa. In addition to tyrosine, is able to catalyze the hydroxylation of phenylalanine and tryptophan with lower specificity. Positively regulates the regression of retinal hyaloid vessels during postnatal development. Its function is as follows. Lacks catalytic activity. In Homo sapiens (Human), this protein is Tyrosine 3-monooxygenase.